Consider the following 281-residue polypeptide: 18S rRNA (guanine-N(7))-methyltransferase (281 aa).

Positions 256 to 281 (KARRRRQGKEVCPDTQYTGRKRKPRF) are disordered.

Belongs to the class I-like SAM-binding methyltransferase superfamily. BUD23/WBSCR22 family. Heterodimer with TRMT112; this heterodimerization is necessary for the metabolic stability and activity of the catalytic subunit BUD23. Interacts with GRIP1. Post-translationally, may be ubiquitinated and targeted to degradation in response to pro-inflammatory cytokine signaling.

The protein resides in the nucleus. The protein localises to the nucleoplasm. It is found in the cytoplasm. Its subcellular location is the perinuclear region. The enzyme catalyses a guanosine in 18S rRNA + S-adenosyl-L-methionine = an N(7)-methylguanosine in 18S rRNA + S-adenosyl-L-homocysteine. S-adenosyl-L-methionine-dependent methyltransferase that specifically methylates the N(7) position of a guanine in 18S rRNA. Requires the methyltransferase adapter protein TRM112 for full rRNA methyltransferase activity. Involved in the pre-rRNA processing steps leading to small-subunit rRNA production independently of its RNA-modifying catalytic activity. Important for biogenesis end export of the 40S ribosomal subunit independent on its methyltransferase activity. Locus-specific steroid receptor coactivator. Potentiates transactivation by glucocorticoid (NR3C1), mineralocorticoid (NR3C2), androgen (AR) and progesterone (PGR) receptors. Required for the maintenance of open chromatin at the TSC22D3/GILZ locus to facilitate NR3C1 loading on the response elements. Required for maintenance of dimethylation on histone H3 'Lys-79' (H3K79me2), although direct histone methyltransferase activity is not observed in vitro. This Bos taurus (Bovine) protein is 18S rRNA (guanine-N(7))-methyltransferase.